We begin with the raw amino-acid sequence, 218 residues long: Ornithine decarboxylase antizyme 2 (218 aa).

It belongs to the ODC antizyme family. As to quaternary structure, interacts with ODC1 and thereby sterically blocks ODC homodimerization. Expressed ubiquitously in 24 hours embryos, with highest levels in telencephalon, lens, retina, cerebellum and hindbrain primordia.

Its function is as follows. Ornithine decarboxylase (ODC) antizyme protein that negatively regulates ODC activity and intracellular polyamine biosynthesis and uptake in response to increased intracellular polyamine levels. Binds to ODC monomers, inhibiting the assembly of the functional ODC homodimers. Does not target the ODC monomers for degradation, which allows a protein synthesis-independent restoration of ODC activity. In Danio rerio (Zebrafish), this protein is Ornithine decarboxylase antizyme 2 (oaz1b).